Here is a 62-residue protein sequence, read N- to C-terminus: Photosystem II reaction center protein Z (62 aa).

A run of 2 helical transmembrane segments spans residues 8–28 and 41–61; these read TLFA…VVFA and LSGL…NSFV.

Belongs to the PsbZ family. PSII is composed of 1 copy each of membrane proteins PsbA, PsbB, PsbC, PsbD, PsbE, PsbF, PsbH, PsbI, PsbJ, PsbK, PsbL, PsbM, PsbT, PsbY, PsbZ, Psb30/Ycf12, at least 3 peripheral proteins of the oxygen-evolving complex and a large number of cofactors. It forms dimeric complexes.

Its subcellular location is the plastid. The protein resides in the chloroplast thylakoid membrane. Functionally, may control the interaction of photosystem II (PSII) cores with the light-harvesting antenna, regulates electron flow through the 2 photosystem reaction centers. PSII is a light-driven water plastoquinone oxidoreductase, using light energy to abstract electrons from H(2)O, generating a proton gradient subsequently used for ATP formation. The chain is Photosystem II reaction center protein Z from Stigeoclonium helveticum (Green alga).